A 503-amino-acid polypeptide reads, in one-letter code: 2-isopropylmalate synthase (503 aa).

The region spanning 4 to 264 (LYIFDTTLRD…EVSIKTEEIY (261 aa)) is the Pyruvate carboxyltransferase domain. Mn(2+) is bound by residues Asp13, His201, His203, and Asn237. Positions 388 to 503 (KLRHLQVVSG…NQLVMLKGKD (116 aa)) are regulatory domain.

The protein belongs to the alpha-IPM synthase/homocitrate synthase family. LeuA type 1 subfamily. In terms of assembly, homodimer. The cofactor is Mn(2+).

Its subcellular location is the cytoplasm. It catalyses the reaction 3-methyl-2-oxobutanoate + acetyl-CoA + H2O = (2S)-2-isopropylmalate + CoA + H(+). Its pathway is amino-acid biosynthesis; L-leucine biosynthesis; L-leucine from 3-methyl-2-oxobutanoate: step 1/4. Functionally, catalyzes the condensation of the acetyl group of acetyl-CoA with 3-methyl-2-oxobutanoate (2-ketoisovalerate) to form 3-carboxy-3-hydroxy-4-methylpentanoate (2-isopropylmalate). The polypeptide is 2-isopropylmalate synthase (Dictyoglomus turgidum (strain DSM 6724 / Z-1310)).